Here is a 367-residue protein sequence, read N- to C-terminus: Germination protease (367 aa).

A propeptide spanning residues 1–15 (MKEPLDLSKYSIRTD) is cleaved from the precursor.

The protein belongs to the peptidase A25 family. As to quaternary structure, homotetramer. Autoproteolytically processed. The inactive tetrameric zymogen termed p46 autoprocesses to a smaller form termed p41, which is active only during spore germination.

It carries out the reaction Endopeptidase action with P4 Glu or Asp, P1 preferably Glu &gt; Asp, P1' hydrophobic and P2' Ala.. Functionally, initiates the rapid degradation of small, acid-soluble proteins during spore germination. The protein is Germination protease of Bacillus cereus (strain ATCC 14579 / DSM 31 / CCUG 7414 / JCM 2152 / NBRC 15305 / NCIMB 9373 / NCTC 2599 / NRRL B-3711).